The following is a 409-amino-acid chain: Nucleoprotein (409 aa).

4 disordered regions span residues 1–32 (MASGKTTGKTDAPAPVIKLGGPKPPKVGSSGN), 44–63 (LNSPPPKFEGSGVPDNENLK), 120–145 (GADTKSRSNQGTRDPDKFDQYPLRFS), and 164–193 (RSGRSTAASSAASSRAPSRDGSRGRRSGAE). The segment covering 15 to 31 (PVIKLGGPKPPKVGSSG) has biased composition (low complexity). The segment at 29 to 160 (SSGNASWFQA…GNFRWDFIPI (132 aa)) is RNA-binding. The CoV N NTD domain occupies 31–156 (GNASWFQALK…GGPDGNFRWD (126 aa)). Over residues 164-179 (RSGRSTAASSAASSRA) the composition is skewed to low complexity. Positions 180–192 (PSRDGSRGRRSGA) are enriched in basic and acidic residues. Ser190 carries the phosphoserine; by host modification. A CoV N CTD domain is found at 215–331 (TKAKADEMAH…QCVDGVGTRP (117 aa)). Positions 226–333 (RYCKRTIPPG…VDGVGTRPKD (108 aa)) are dimerization. Cys320 and Cys323 are joined by a disulfide. The disordered stretch occupies residues 326 to 409 (GVGTRPKDDE…GDSALGENEL (84 aa)). Over residues 341 to 355 (RPNSRPATRTSSPAP) the composition is skewed to polar residues. Positions 358–367 (QRQKKEKKSK) are enriched in basic residues. Over residues 368-384 (KQDDEVDKALTSDEERN) the composition is skewed to basic and acidic residues. Residue Thr378 is modified to Phosphothreonine; by host. At Ser379 the chain carries Phosphoserine; by host.

The protein belongs to the gammacoronavirus nucleocapsid protein family. As to quaternary structure, homooligomer. Both monomeric and oligomeric forms interact with RNA. Interacts with protein M. Interacts with NSP3; this interaction serves to tether the genome to the newly translated replicase-transcriptase complex at a very early stage of infection. ADP-ribosylated. The ADP-ribosylation is retained in the virion during infection. In terms of processing, phosphorylated on serine and threonine residues.

The protein localises to the virion. It is found in the host endoplasmic reticulum-Golgi intermediate compartment. Its subcellular location is the host Golgi apparatus. Packages the positive strand viral genome RNA into a helical ribonucleocapsid (RNP) and plays a fundamental role during virion assembly through its interactions with the viral genome and membrane protein M. Plays an important role in enhancing the efficiency of subgenomic viral RNA transcription as well as viral replication. This chain is Nucleoprotein, found in Avian infectious bronchitis virus (strain H120) (IBV).